Reading from the N-terminus, the 1010-residue chain is DENN domain-containing protein 1A (1010 aa).

Residues 13–143 form the uDENN domain; sequence FEVYIEVNRP…HGHPIPEPGT (131 aa). Positions 160-296 constitute a cDENN domain; it reads ELPSIPENRN…VVSALKNRIR (137 aa). Residues 298-375 enclose the dDENN domain; that stretch reads MSTTTGDGVA…DGRLDLLNSG (78 aa). The FXDXF motif motif lies at 378 to 382; the sequence is FSDVF. A disordered region spans residues 455-554; the sequence is GFSTATEEPL…EATVKEPQST (100 aa). Over residues 472-482 the composition is skewed to basic and acidic residues; that stretch reads IEKKRGEERRP. Residues 493–502 show a composition bias toward basic residues; it reads PRPHVPRRPK. A compositionally biased stretch (polar residues) spans 509–524; the sequence is SRTTAGSSPDQPQQYR. Basic and acidic residues predominate over residues 538 to 548; the sequence is SPEKDSSEATV. A Clathrin box motif is present at residues 560 to 569; sequence SLLEDIFSNL.

It is found in the cytoplasmic vesicle. The protein localises to the clathrin-coated vesicle membrane. The protein resides in the presynaptic cell membrane. Functionally, guanine nucleotide exchange factor (GEF) regulating clathrin-mediated endocytosis through RAB35 activation. Promotes the exchange of GDP to GTP, converting inactive GDP-bound RAB35 into its active GTP-bound form. Regulates clathrin-mediated endocytosis of synaptic vesicles and mediates exit from early endosomes. Binds phosphatidylinositol-phosphates (PtdInsPs), with some preference for PtdIns(3)P. The protein is DENN domain-containing protein 1A (dennd1a) of Xenopus laevis (African clawed frog).